The following is a 141-amino-acid chain: Large ribosomal subunit protein uL11 (141 aa).

This sequence belongs to the universal ribosomal protein uL11 family. As to quaternary structure, part of the ribosomal stalk of the 50S ribosomal subunit. Interacts with L10 and the large rRNA to form the base of the stalk. L10 forms an elongated spine to which L12 dimers bind in a sequential fashion forming a multimeric L10(L12)X complex. In terms of processing, one or more lysine residues are methylated.

Its function is as follows. Forms part of the ribosomal stalk which helps the ribosome interact with GTP-bound translation factors. The polypeptide is Large ribosomal subunit protein uL11 (Prochlorococcus marinus (strain MIT 9515)).